The following is a 132-amino-acid chain: Transcription antitermination protein NusB (132 aa).

It belongs to the NusB family.

Its function is as follows. Involved in transcription antitermination. Required for transcription of ribosomal RNA (rRNA) genes. Binds specifically to the boxA antiterminator sequence of the ribosomal RNA (rrn) operons. This is Transcription antitermination protein NusB from Sulfurimonas denitrificans (strain ATCC 33889 / DSM 1251) (Thiomicrospira denitrificans (strain ATCC 33889 / DSM 1251)).